The chain runs to 324 residues: FCS-Like Zinc finger 11 (324 aa).

Residues 266–309 form an FLZ-type zinc finger; the sequence is NFLGICNFCNKKLGGGDDIYMYREKSFCSEECRSEEMMIDEEDL.

The protein belongs to the FLZ family. In terms of assembly, interacts with KIN10 and KIN11 via its FLZ-type zinc finger domain. Forms heterodimer with FLZ2 in vitro.

The protein localises to the cytoplasm. Its subcellular location is the nucleus. In terms of biological role, may act as an adapter to facilitate the interaction of SnRK1 complex with effector proteins, conferring tissue- and stimulus-type specific differences in the SnRK1 regulation pathway. In Arabidopsis thaliana (Mouse-ear cress), this protein is FCS-Like Zinc finger 11.